Reading from the N-terminus, the 298-residue chain is ADP/ATP translocase 2 (298 aa).

Methionine 1 bears the N-acetylmethionine mark. Residues 1–7 (MTDAAVS) are Mitochondrial intermembrane-facing. Threonine 2 bears the N-acetylthreonine; in ADP/ATP translocase 2, N-terminally processed mark. The Solcar 1 repeat unit spans residues 6–98 (VSFAKDFLAG…FAFKDKYKQI (93 aa)). Serine 7 carries the post-translational modification Phosphoserine. Residues 8–37 (FAKDFLAGGVAAAISKTAVAPIERVKLLLQ) traverse the membrane as a helical segment. Lysine 23 bears the N6-malonyllysine mark. The Mitochondrial matrix portion of the chain corresponds to 38-74 (VQHASKQITADKQYKGIIDCVVRIPKEQGVLSFWRGN). An N6-succinyllysine modification is found at lysine 43. Lysine 52 bears the N6,N6,N6-trimethyllysine; alternate mark. Lysine 52 is subject to N6,N6-dimethyllysine; alternate. An N6-methyllysine; alternate modification is found at lysine 52. A helical transmembrane segment spans residues 75–99 (LANVIRYFPTQALNFAFKDKYKQIF). Residues arginine 80 and lysine 92 each contribute to the ADP site. Lysine 92 and lysine 96 each carry N6-malonyllysine. Over 100–109 (LGGVDKRTQF) the chain is Mitochondrial intermembrane. Residue lysine 105 is modified to N6-acetyllysine; alternate. Lysine 105 carries the N6-succinyllysine; alternate modification. The helical transmembrane segment at 110-130 (WRYFAGNLASGGAAGATSLCF) threads the bilayer. Solcar repeat units lie at residues 111 to 201 (RYFA…AKGM) and 212 to 297 (ISWM…IKKY). Residues 131-178 (VYPLDFARTRLAADVGKAGAEREFKGLGDCLVKIYKSDGIKGLYQGFN) are Mitochondrial matrix-facing. Residue lysine 147 is modified to N6-methyllysine; alternate. N6-acetyllysine; alternate occurs at positions 147 and 155. An N6-succinyllysine; alternate mark is found at lysine 147 and lysine 155. Position 147 is an N6-malonyllysine; alternate (lysine 147). N6-acetyllysine is present on residues lysine 163 and lysine 166. A helical transmembrane segment spans residues 179–199 (VSVQGIIIYRAAYFGIYDTAK). Residues 200 to 210 (GMLPDPKNTHI) lie on the Mitochondrial intermembrane side of the membrane. Residues 211–231 (FISWMIAQSVTAVAGLTSYPF) traverse the membrane as a helical segment. Residues 232 to 273 (DTVRRRMMMQSGRKGTDIMYTGTLDCWRKIARDEGGKAFFKG) are Mitochondrial matrix-facing. Residue arginine 235 coordinates ADP. Residues 235-240 (RRRMMM) are important for transport activity. Positions 235–240 (RRRMMM) match the Nucleotide carrier signature motif motif. Lysine 268 bears the N6-acetyllysine; alternate mark. Lysine 268 carries the post-translational modification N6-succinyllysine; alternate. Residues 274 to 291 (AWSNVLRGMGGAFVLVLY) traverse the membrane as a helical segment. Topologically, residues 292 to 298 (DEIKKYT) are mitochondrial intermembrane.

This sequence belongs to the mitochondrial carrier (TC 2.A.29) family. As to quaternary structure, monomer. Component of the MMXD complex, which includes CIAO1, ERCC2, CIAO2B, MMS19 and SLC25A5/ANT2. Interacts with AK4. Interacts with TIMM44; leading to inhibit the presequence translocase TIMM23, thereby promoting stabilization of PINK1. Trimethylated by ANTKMT at Lys-52. As to expression, present in kidney, brain, heart, liver and skeletal muscle.

It is found in the mitochondrion inner membrane. The protein resides in the membrane. The enzyme catalyses ADP(in) + ATP(out) = ADP(out) + ATP(in). The catalysed reaction is H(+)(in) = H(+)(out). The matrix-open state (m-state) is inhibited by the membrane-permeable bongkrekic acid (BKA). The cytoplasmic-open state (c-state) is inhibited by the membrane-impermeable toxic inhibitor carboxyatractyloside (CATR). Proton transporter activity is inhibited by ADP:ATP antiporter activity. ADP:ATP antiporter that mediates import of ADP into the mitochondrial matrix for ATP synthesis, and export of ATP out to fuel the cell. Cycles between the cytoplasmic-open state (c-state) and the matrix-open state (m-state): operates by the alternating access mechanism with a single substrate-binding site intermittently exposed to either the cytosolic (c-state) or matrix (m-state) side of the inner mitochondrial membrane. In addition to its ADP:ATP antiporter activity, also involved in mitochondrial uncoupling and mitochondrial permeability transition pore (mPTP) activity. Plays a role in mitochondrial uncoupling by acting as a proton transporter: proton transport uncouples the proton flows via the electron transport chain and ATP synthase to reduce the efficiency of ATP production and cause mitochondrial thermogenesis. Proton transporter activity is inhibited by ADP:ATP antiporter activity, suggesting that SLC25A5/ANT2 acts as a master regulator of mitochondrial energy output by maintaining a delicate balance between ATP production (ADP:ATP antiporter activity) and thermogenesis (proton transporter activity). Proton transporter activity requires free fatty acids as cofactor, but does not transport it. Probably mediates mitochondrial uncoupling in tissues that do not express UCP1. Also plays a key role in mPTP opening, a non-specific pore that enables free passage of the mitochondrial membranes to solutes of up to 1.5 kDa, and which contributes to cell death. It is however unclear if SLC25A5/ANT2 constitutes a pore-forming component of mPTP or regulates it. Acts as a regulator of mitophagy independently of ADP:ATP antiporter activity: promotes mitophagy via interaction with TIMM44, leading to inhibit the presequence translocase TIMM23, thereby promoting stabilization of PINK1. As part of the mitotic spindle-associated MMXD complex it may play a role in chromosome segregation. This Rattus norvegicus (Rat) protein is ADP/ATP translocase 2.